Consider the following 205-residue polypeptide: Probable GTP-binding protein EngB (205 aa).

Residues 29–203 (QGAEIAFIGR…KAVLSQWFRS (175 aa)) form the EngB-type G domain. GTP contacts are provided by residues 37-44 (GRSNAGKS), 64-68 (GRTQM), 82-85 (DLPG), 149-152 (TKSD), and 182-184 (FSS). The Mg(2+) site is built by serine 44 and threonine 66.

Belongs to the TRAFAC class TrmE-Era-EngA-EngB-Septin-like GTPase superfamily. EngB GTPase family. Mg(2+) is required as a cofactor.

Its function is as follows. Necessary for normal cell division and for the maintenance of normal septation. The sequence is that of Probable GTP-binding protein EngB from Coxiella burnetii (strain CbuG_Q212) (Coxiella burnetii (strain Q212)).